We begin with the raw amino-acid sequence, 303 residues long: Coenzyme PQQ synthesis protein B (303 aa).

It belongs to the PqqB family.

It participates in cofactor biosynthesis; pyrroloquinoline quinone biosynthesis. In terms of biological role, may be involved in the transport of PQQ or its precursor to the periplasm. The protein is Coenzyme PQQ synthesis protein B of Pseudomonas putida (strain W619).